Here is a 98-residue protein sequence, read N- to C-terminus: DNA-binding protein Fis (98 aa).

Positions 74 to 93 (QTRAALMLGINRSTLRKKLK) form a DNA-binding region, H-T-H motif.

Belongs to the transcriptional regulatory Fis family. Homodimer.

Activates ribosomal RNA transcription. Plays a direct role in upstream activation of rRNA promoters. The chain is DNA-binding protein Fis from Buchnera aphidicola subsp. Acyrthosiphon pisum (strain 5A).